The chain runs to 151 residues: Nucleoside diphosphate kinase (151 aa).

The ATP site is built by Lys9, Phe57, Arg86, Thr92, Arg103, and Asn113. Residue His116 is the Pros-phosphohistidine intermediate of the active site.

The protein belongs to the NDK family. As to quaternary structure, homotetramer. Requires Mg(2+) as cofactor.

The protein localises to the cytoplasm. It catalyses the reaction a 2'-deoxyribonucleoside 5'-diphosphate + ATP = a 2'-deoxyribonucleoside 5'-triphosphate + ADP. It carries out the reaction a ribonucleoside 5'-diphosphate + ATP = a ribonucleoside 5'-triphosphate + ADP. Major role in the synthesis of nucleoside triphosphates other than ATP. The ATP gamma phosphate is transferred to the NDP beta phosphate via a ping-pong mechanism, using a phosphorylated active-site intermediate. The polypeptide is Nucleoside diphosphate kinase (Chloroflexus aggregans (strain MD-66 / DSM 9485)).